We begin with the raw amino-acid sequence, 310 residues long: Acetylglutamate kinase (310 aa).

Substrate is bound by residues 76-77, Arg98, and Asn203; that span reads GG.

This sequence belongs to the acetylglutamate kinase family. ArgB subfamily.

Its subcellular location is the cytoplasm. The enzyme catalyses N-acetyl-L-glutamate + ATP = N-acetyl-L-glutamyl 5-phosphate + ADP. It participates in amino-acid biosynthesis; L-arginine biosynthesis; N(2)-acetyl-L-ornithine from L-glutamate: step 2/4. Catalyzes the ATP-dependent phosphorylation of N-acetyl-L-glutamate. The polypeptide is Acetylglutamate kinase (Cutibacterium acnes (strain DSM 16379 / KPA171202) (Propionibacterium acnes)).